The following is a 2219-amino-acid chain: E3 ubiquitin-protein ligase Ubr3 (2219 aa).

Disordered stretches follow at residues 1 to 48 and 78 to 134; these read MDED…DLSS and AAGA…SALS. Over residues 20–29 the composition is skewed to basic and acidic residues; it reads VREQTHHPPM. Positions 31 to 42 are enriched in acidic residues; it reads EDQELDNEDGSS. Residues 114-134 show a composition bias toward low complexity; sequence GPTTTTSSGTAAESGAASALS. Residues 222 to 293 form a UBR-type zinc finger; that stretch reads AKCGLVWVPH…AEGFCSDHGI (72 aa). Disordered stretches follow at residues 1348-1367 and 1440-1464; these read SFSLSDGEDQSSDDDSTMDV and QREKQAEAKAREAKEKEERRKKARE. Over residues 1353-1367 the composition is skewed to acidic residues; that stretch reads DGEDQSSDDDSTMDV. The segment at 1607 to 1643 adopts an RING-type; degenerate zinc-finger fold; sequence CGHHVHLSCLEAYLKTLYTTQRQPVQDRGEFYCPVCR. Disordered stretches follow at residues 1872 to 1902 and 1935 to 1954; these read VGSDNSAAESQQQESAAGTTNNRRRAGQQQQ and SAAASAAGSSSTTSTNHGAS. Residues 1877–1888 are compositionally biased toward low complexity; it reads SAAESQQQESAA.

The protein belongs to the E3 ubiquitin-protein ligase UBR1-like family. Selectively interacts (via UBR-type zinc finger) with the cleaved form of Diap1; this interaction is enhanced by tal. Interacts with tal and Rrp1. Interacts with ovo isoform B (via N-terminus). Interacts with Cad99C (via the cytoplasmic domain). Interacts with ck and Sans. Interacts with cos (via Kinesin motor domain). In vitro, self-ubiquitination in the presence of E1, E2 and ubiquitin.

It localises to the cytoplasm. The protein localises to the nucleus. The enzyme catalyses S-ubiquitinyl-[E2 ubiquitin-conjugating enzyme]-L-cysteine + [acceptor protein]-L-lysine = [E2 ubiquitin-conjugating enzyme]-L-cysteine + N(6)-ubiquitinyl-[acceptor protein]-L-lysine.. The protein operates within protein modification; protein ubiquitination. E3 ubiquitin-protein ligase which is a component of the N-end rule pathway. Recognizes and binds to proteins bearing specific N-terminal residues, leading to their ubiquitination and subsequent degradation. Binds to the E3 ubiquitin-protein ligase Diap1 and enhances its ubiquitination and anti-apoptotic functions. Essential during trichome development for the ubiquitination of the N-terminus of ovo isoform B (svb), converting it from a transcriptional inhibitor to an activator. Positively regulates a hh-signaling pathway which functions in photoreceptor differentiation. Activation of hh up-regulates transcription of Ubr3, which in turn promotes hh signaling by mediating the ubiquitination and degradation of cos. Necessary for auditory transduction: plays a role in Johnston's organ organization by acting in the regulation of zip and ck function in scolopidial apical attachment. Likely to function by acting in a pathway that negatively regulates the ubiquitination of zip, consequently affecting its interaction with ck. May also negatively regulate a component of the SCF (SKP1-CUL1-F-box protein) E3 ubiquitin-protein ligase complex Cul1, which also appears to function in the negative regulation of the zip-ck interaction and scolopidial apical attachment. This chain is E3 ubiquitin-protein ligase Ubr3, found in Drosophila melanogaster (Fruit fly).